Here is a 41-residue protein sequence, read N- to C-terminus: MIMITIKLGRDYTQDLINKCGRGGVGGGGLNGIFLSYEGVV.

This is an uncharacterized protein from Dictyostelium discoideum (Social amoeba).